The sequence spans 38 residues: Large ribosomal subunit protein bL36B (38 aa).

It belongs to the bacterial ribosomal protein bL36 family.

This is Large ribosomal subunit protein bL36B from Prochlorococcus marinus (strain MIT 9515).